The sequence spans 1140 residues: Structural maintenance of chromosomes protein 6 (1140 aa).

Residues 1 to 63 (MTTELTNVSL…ERQSRLQRSS (63 aa)) are disordered. Over residues 14-28 (ITEKTSENRRKRDSD) the composition is skewed to basic and acidic residues. 2 consecutive short sequence motifs (nuclear localization signal) follow at residues 22–25 (RRKR) and 41–44 (KRIR). Over residues 47 to 57 (RNQDNRPERQS) the composition is skewed to basic and acidic residues. 124–131 (GHNGSGKS) is an ATP binding site. 3 coiled-coil regions span residues 262–290 (IQLK…NKKT), 329–369 (AQVV…QSDI), and 448–493 (GSQI…GGNL). The interval 494–710 (TSLLTKKDSI…WNRPPRIGFS (217 aa)) is flexible hinge. 2 coiled-coil regions span residues 711 to 978 (SSTS…RNEM) and 1113 to 1140 (IGLD…STAP).

Belongs to the SMC family. SMC6 subfamily. In terms of assembly, two subcomplexes smc5-smc6-nse2 and nse1-nse3-nse4 exist. These subcomplexes are then brought together via a number of interactions, forming the Smc5-Smc6 complex. In terms of processing, sumoylated by nse2.

It is found in the nucleus. The protein resides in the chromosome. In terms of biological role, acts in a DNA repair pathway for removal of UV-induced DNA damage that is distinct from classical nucleotide excision repair and in repair of ionizing radiation damage. Functions in homologous recombination repair of DNA double strand breaks and in recovery of stalled replication forks. Plays a critical role in meiosis. The sequence is that of Structural maintenance of chromosomes protein 6 (smc6) from Schizosaccharomyces pombe (strain 972 / ATCC 24843) (Fission yeast).